A 178-amino-acid chain; its full sequence is Large ribosomal subunit protein uL6 (178 aa).

This sequence belongs to the universal ribosomal protein uL6 family. As to quaternary structure, part of the 50S ribosomal subunit.

Functionally, this protein binds to the 23S rRNA, and is important in its secondary structure. It is located near the subunit interface in the base of the L7/L12 stalk, and near the tRNA binding site of the peptidyltransferase center. This Nautilia profundicola (strain ATCC BAA-1463 / DSM 18972 / AmH) protein is Large ribosomal subunit protein uL6.